We begin with the raw amino-acid sequence, 629 residues long: UvrABC system protein C (629 aa).

The region spanning 12 to 91 (DRPGCYLFKD…IKKHKPKYNI (80 aa)) is the GIY-YIG domain. Positions 200-235 (QEVLERLRARMEQAAERLEFERAAELRDQIRAIEKV) constitute a UVR domain.

The protein belongs to the UvrC family. Interacts with UvrB in an incision complex.

It localises to the cytoplasm. The UvrABC repair system catalyzes the recognition and processing of DNA lesions. UvrC both incises the 5' and 3' sides of the lesion. The N-terminal half is responsible for the 3' incision and the C-terminal half is responsible for the 5' incision. The polypeptide is UvrABC system protein C (Symbiobacterium thermophilum (strain DSM 24528 / JCM 14929 / IAM 14863 / T)).